A 293-amino-acid chain; its full sequence is 33 kDa chaperonin (293 aa).

2 cysteine pairs are disulfide-bonded: cysteine 239–cysteine 241 and cysteine 272–cysteine 275.

It belongs to the HSP33 family. Under oxidizing conditions two disulfide bonds are formed involving the reactive cysteines. Under reducing conditions zinc is bound to the reactive cysteines and the protein is inactive.

Its subcellular location is the cytoplasm. In terms of biological role, redox regulated molecular chaperone. Protects both thermally unfolding and oxidatively damaged proteins from irreversible aggregation. Plays an important role in the bacterial defense system toward oxidative stress. The protein is 33 kDa chaperonin of Limosilactobacillus fermentum (strain NBRC 3956 / LMG 18251) (Lactobacillus fermentum).